Reading from the N-terminus, the 181-residue chain is 6,7-dimethyl-8-ribityllumazine synthase (181 aa).

Residues phenylalanine 24, 62–64 (SFE), and 86–88 (AII) each bind 5-amino-6-(D-ribitylamino)uracil. A (2S)-2-hydroxy-3-oxobutyl phosphate-binding site is contributed by 91–92 (QT). Histidine 94 acts as the Proton donor in catalysis. Phenylalanine 119 contacts 5-amino-6-(D-ribitylamino)uracil. Arginine 133 lines the (2S)-2-hydroxy-3-oxobutyl phosphate pocket.

It belongs to the DMRL synthase family.

The enzyme catalyses (2S)-2-hydroxy-3-oxobutyl phosphate + 5-amino-6-(D-ribitylamino)uracil = 6,7-dimethyl-8-(1-D-ribityl)lumazine + phosphate + 2 H2O + H(+). It functions in the pathway cofactor biosynthesis; riboflavin biosynthesis; riboflavin from 2-hydroxy-3-oxobutyl phosphate and 5-amino-6-(D-ribitylamino)uracil: step 1/2. In terms of biological role, catalyzes the formation of 6,7-dimethyl-8-ribityllumazine by condensation of 5-amino-6-(D-ribitylamino)uracil with 3,4-dihydroxy-2-butanone 4-phosphate. This is the penultimate step in the biosynthesis of riboflavin. This chain is 6,7-dimethyl-8-ribityllumazine synthase, found in Microcystis aeruginosa (strain NIES-843 / IAM M-2473).